A 496-amino-acid polypeptide reads, in one-letter code: GTPase Der (496 aa).

EngA-type G domains follow at residues 3–166 (PVVA…FDNL) and 208–381 (IKLA…RSAT). GTP contacts are provided by residues 9–16 (GRPNVGKS), 56–60 (DTGGI), 118–121 (NKVD), 214–221 (GRPNVGKS), 261–265 (DTAGV), and 326–329 (NKWD). Residues 382 to 466 (TRVGTSVLTR…PIRIQFQNSD (85 aa)) enclose the KH-like domain.

The protein belongs to the TRAFAC class TrmE-Era-EngA-EngB-Septin-like GTPase superfamily. EngA (Der) GTPase family. As to quaternary structure, associates with the 50S ribosomal subunit.

Functionally, GTPase that plays an essential role in the late steps of ribosome biogenesis. This chain is GTPase Der, found in Vibrio vulnificus (strain CMCP6).